A 216-amino-acid polypeptide reads, in one-letter code: ATP phosphoribosyltransferase (216 aa).

The protein belongs to the ATP phosphoribosyltransferase family. Short subfamily. In terms of assembly, heteromultimer composed of HisG and HisZ subunits.

Its subcellular location is the cytoplasm. It catalyses the reaction 1-(5-phospho-beta-D-ribosyl)-ATP + diphosphate = 5-phospho-alpha-D-ribose 1-diphosphate + ATP. Its pathway is amino-acid biosynthesis; L-histidine biosynthesis; L-histidine from 5-phospho-alpha-D-ribose 1-diphosphate: step 1/9. Catalyzes the condensation of ATP and 5-phosphoribose 1-diphosphate to form N'-(5'-phosphoribosyl)-ATP (PR-ATP). Has a crucial role in the pathway because the rate of histidine biosynthesis seems to be controlled primarily by regulation of HisG enzymatic activity. The chain is ATP phosphoribosyltransferase from Chromohalobacter salexigens (strain ATCC BAA-138 / DSM 3043 / CIP 106854 / NCIMB 13768 / 1H11).